We begin with the raw amino-acid sequence, 470 residues long: Rhamnulokinase (470 aa).

Residue 12–16 coordinates ATP; sequence ASSGR. Substrate-binding positions include Ala-80 and 237–239; that span reads HDT. Asp-238 serves as the catalytic Proton acceptor. Thr-259 contacts ATP. Asn-296 provides a ligand contact to substrate. Gln-304 is an ATP binding site. The cysteines at positions 353 and 370 are disulfide-linked. Gly-402 lines the ATP pocket.

It belongs to the rhamnulokinase family. Requires Mg(2+) as cofactor.

The enzyme catalyses L-rhamnulose + ATP = L-rhamnulose 1-phosphate + ADP + H(+). It participates in carbohydrate degradation; L-rhamnose degradation; glycerone phosphate from L-rhamnose: step 2/3. Involved in the catabolism of L-rhamnose (6-deoxy-L-mannose). Catalyzes the transfer of the gamma-phosphate group from ATP to the 1-hydroxyl group of L-rhamnulose to yield L-rhamnulose 1-phosphate. In Oceanobacillus iheyensis (strain DSM 14371 / CIP 107618 / JCM 11309 / KCTC 3954 / HTE831), this protein is Rhamnulokinase.